The following is a 310-amino-acid chain: Methionyl-tRNA formyltransferase (310 aa).

(6S)-5,6,7,8-tetrahydrofolate is bound at residue 106 to 109; that stretch reads SLLP.

Belongs to the Fmt family.

It catalyses the reaction L-methionyl-tRNA(fMet) + (6R)-10-formyltetrahydrofolate = N-formyl-L-methionyl-tRNA(fMet) + (6S)-5,6,7,8-tetrahydrofolate + H(+). Attaches a formyl group to the free amino group of methionyl-tRNA(fMet). The formyl group appears to play a dual role in the initiator identity of N-formylmethionyl-tRNA by promoting its recognition by IF2 and preventing the misappropriation of this tRNA by the elongation apparatus. This chain is Methionyl-tRNA formyltransferase, found in Fervidobacterium nodosum (strain ATCC 35602 / DSM 5306 / Rt17-B1).